The primary structure comprises 386 residues: EARP and GARP complex-interacting protein 1 (386 aa).

N-acetylmethionine is present on methionine 1. 4 WD repeats span residues 132 to 172, 182 to 222, 226 to 266, and 270 to 310; these read GAQG…SQAV, RGQL…QIYC, AHGQ…EPVK, and EHSH…SEPF. The segment at 312-332 is disordered; sequence HLVDDDDVSDPEEHHTEKSKE. Serine 320 is modified (phosphoserine). Positions 322-332 are enriched in basic and acidic residues; it reads PEEHHTEKSKE. Residues 344-384 form a WD 5 repeat; the sequence is EHEDSVYAVDWASADPWLFASLSYDGRLVINRVPRALKYHI.

It belongs to the WD repeat EIPR1 family. In terms of assembly, interacts with two multisubunit tethering complexes: EARP composed of VPS50, VPS51, VPS52 and VPS53 subunits and GARP complex composed of VPS51, VPS52, VPS53 and VPS54 subunits. Interacts with SNAP29. As to expression, ubiquitous. Highly expressed in brain, adipose tissue, spleen and kidney (at protein level).

Its subcellular location is the golgi apparatus. The protein resides in the trans-Golgi network. In terms of biological role, acts as a component of endosomal retrieval machinery that is involved in protein transport from early endosomes to either recycling endosomes or the trans-Golgi network. Mediates the recruitment of Golgi-associated retrograde protein (GARP) complex to the trans-Golgi network and controls early endosome-to-Golgi transport of internalized protein. Promotes the recycling of internalized transferrin receptor (TFRC) to the plasma membrane through interaction with endosome-associated recycling protein (EARP) complex. Controls proper insulin distribution and secretion, and retention of cargo in mature dense core vesicles. Required for the stability of the endosome-associated retrograde protein (EARP) complex subunits and for proper localization and association of EARP with membranes. The polypeptide is EARP and GARP complex-interacting protein 1 (Rattus norvegicus (Rat)).